A 192-amino-acid polypeptide reads, in one-letter code: Peptidyl-tRNA hydrolase (192 aa).

Y18 contributes to the tRNA binding site. The active-site Proton acceptor is the H23. Residues F69, N71, and N117 each coordinate tRNA.

This sequence belongs to the PTH family. As to quaternary structure, monomer.

The protein localises to the cytoplasm. It carries out the reaction an N-acyl-L-alpha-aminoacyl-tRNA + H2O = an N-acyl-L-amino acid + a tRNA + H(+). Hydrolyzes ribosome-free peptidyl-tRNAs (with 1 or more amino acids incorporated), which drop off the ribosome during protein synthesis, or as a result of ribosome stalling. Its function is as follows. Catalyzes the release of premature peptidyl moieties from peptidyl-tRNA molecules trapped in stalled 50S ribosomal subunits, and thus maintains levels of free tRNAs and 50S ribosomes. The polypeptide is Peptidyl-tRNA hydrolase (Neisseria gonorrhoeae (strain ATCC 700825 / FA 1090)).